The sequence spans 349 residues: Peroxisomal acyl-coenzyme A thioester hydrolase 1 (349 aa).

Catalysis depends on charge relay system residues aspartate 259, serine 282, and glutamine 333. The Microbody targeting signal motif lies at 347–349 (AKF).

Belongs to the C/M/P thioester hydrolase family.

Its subcellular location is the peroxisome. The enzyme catalyses hexadecanoyl-CoA + H2O = hexadecanoate + CoA + H(+). Acyl-coenzyme A (acyl-CoA) thioesterases are a group of enzymes that catalyze the hydrolysis of acyl-CoAs to the free fatty acid and coenzyme A (CoASH), providing the potential to regulate intracellular levels of acyl-CoAs, free fatty acids and CoASH. Contributes to growth on fatty acids. This Saccharomyces cerevisiae (strain ATCC 204508 / S288c) (Baker's yeast) protein is Peroxisomal acyl-coenzyme A thioester hydrolase 1 (TES1).